Reading from the N-terminus, the 261-residue chain is tRNA pseudouridine synthase A (261 aa).

The active-site Nucleophile is aspartate 51. Residue tyrosine 109 coordinates substrate.

Belongs to the tRNA pseudouridine synthase TruA family. In terms of assembly, homodimer.

It catalyses the reaction uridine(38/39/40) in tRNA = pseudouridine(38/39/40) in tRNA. Its function is as follows. Formation of pseudouridine at positions 38, 39 and 40 in the anticodon stem and loop of transfer RNAs. In Shewanella sediminis (strain HAW-EB3), this protein is tRNA pseudouridine synthase A.